Consider the following 171-residue polypeptide: UPF0312 protein SAV2687 (171 aa).

It belongs to the UPF0312 family.

This chain is UPF0312 protein SAV2687, found in Staphylococcus aureus (strain Mu50 / ATCC 700699).